The chain runs to 39 residues: Photosystem II reaction center protein L (39 aa).

The chain crosses the membrane as a helical span at residues 18–38 (ILYWGLLLIFVLAVLFSNYFF).

This sequence belongs to the PsbL family. PSII is composed of 1 copy each of membrane proteins PsbA, PsbB, PsbC, PsbD, PsbE, PsbF, PsbH, PsbI, PsbJ, PsbK, PsbL, PsbM, PsbT, PsbX, PsbY, PsbZ, Psb30/Ycf12, at least 3 peripheral proteins of the oxygen-evolving complex and a large number of cofactors. It forms dimeric complexes.

Its subcellular location is the plastid membrane. One of the components of the core complex of photosystem II (PSII). PSII is a light-driven water:plastoquinone oxidoreductase that uses light energy to abstract electrons from H(2)O, generating O(2) and a proton gradient subsequently used for ATP formation. It consists of a core antenna complex that captures photons, and an electron transfer chain that converts photonic excitation into a charge separation. This subunit is found at the monomer-monomer interface and is required for correct PSII assembly and/or dimerization. The sequence is that of Photosystem II reaction center protein L from Cuscuta pentagona (Five-angled dodder).